The primary structure comprises 409 residues: 5-aminolevulinate synthase (409 aa).

Arginine 21, serine 137, and lysine 156 together coordinate succinyl-CoA. Pyridoxal 5'-phosphate-binding residues include serine 189, histidine 217, and threonine 245. The active site involves lysine 248. At lysine 248 the chain carries N6-(pyridoxal phosphate)lysine. The pyridoxal 5'-phosphate site is built by serine 277 and threonine 278. Position 365 (threonine 365) interacts with succinyl-CoA.

The protein belongs to the class-II pyridoxal-phosphate-dependent aminotransferase family. In terms of assembly, homodimer. Requires pyridoxal 5'-phosphate as cofactor.

The catalysed reaction is succinyl-CoA + glycine + H(+) = 5-aminolevulinate + CO2 + CoA. It functions in the pathway porphyrin-containing compound metabolism; protoporphyrin-IX biosynthesis; 5-aminolevulinate from glycine: step 1/1. This is 5-aminolevulinate synthase (hemA) from Rhodobacter capsulatus (strain ATCC BAA-309 / NBRC 16581 / SB1003).